The chain runs to 317 residues: Proline iminopeptidase (317 aa).

The 256-residue stretch at 41–296 folds into the AB hydrolase-1 domain; the sequence is VFIHGGPGGG…ELHIVEGAGH (256 aa). The Nucleophile role is filled by Ser-113. Asp-268 is a catalytic residue. His-296 functions as the Proton donor in the catalytic mechanism.

It belongs to the peptidase S33 family. Monomer.

It localises to the cytoplasm. It catalyses the reaction Release of N-terminal proline from a peptide.. Functionally, specifically catalyzes the removal of N-terminal proline residues from peptides. This chain is Proline iminopeptidase (pip), found in Serratia marcescens.